Reading from the N-terminus, the 131-residue chain is D-ribose pyranase (131 aa).

Residue histidine 20 is the Proton donor of the active site. Substrate is bound by residues aspartate 28, histidine 98, and 120–122 (FSN).

It belongs to the RbsD / FucU family. RbsD subfamily. Homodecamer.

It localises to the cytoplasm. The enzyme catalyses beta-D-ribopyranose = beta-D-ribofuranose. Its pathway is carbohydrate metabolism; D-ribose degradation; D-ribose 5-phosphate from beta-D-ribopyranose: step 1/2. Functionally, catalyzes the interconversion of beta-pyran and beta-furan forms of D-ribose. In Levilactobacillus brevis (strain ATCC 367 / BCRC 12310 / CIP 105137 / JCM 1170 / LMG 11437 / NCIMB 947 / NCTC 947) (Lactobacillus brevis), this protein is D-ribose pyranase.